A 135-amino-acid polypeptide reads, in one-letter code: Mediator of RNA polymerase II transcription subunit 10 (135 aa).

This sequence belongs to the Mediator complex subunit 10 family. In terms of assembly, component of the Mediator complex.

It localises to the nucleus. Its function is as follows. Component of the Mediator complex, a coactivator involved in the regulated transcription of nearly all RNA polymerase II-dependent genes. Mediator functions as a bridge to convey information from gene-specific regulatory proteins to the basal RNA polymerase II transcription machinery. Mediator is recruited to promoters by direct interactions with regulatory proteins and serves as a scaffold for the assembly of a functional preinitiation complex with RNA polymerase II and the general transcription factors. The chain is Mediator of RNA polymerase II transcription subunit 10 (med10) from Xenopus tropicalis (Western clawed frog).